The following is a 44-amino-acid chain: Alpha-amylase inhibitor WDAI-3 (44 aa).

A disulfide bond links C20 and C41.

Belongs to the protease inhibitor I6 (cereal trypsin/alpha-amylase inhibitor) family. In terms of assembly, homodimer. In terms of processing, the disulfide bonds are essential for the inhibitor activity. Endosperm.

Its subcellular location is the secreted. In terms of biological role, alpha-amylase inhibitor. The protein is Alpha-amylase inhibitor WDAI-3 (IHA-B1-2) of Triticum aestivum (Wheat).